A 1058-amino-acid polypeptide reads, in one-letter code: MPKRTDIQKIMVIGSGPIIIGQAAEFDYAGTQACLSLKEEGYEVVLVNSNPATIMTDKEIADKVYIEPITLEFVTRILRKERPDALLPTLGGQTGLNMAMELSKNGILDELGVELLGTKLSAIDQAEDRDLFKQLMEELEQPIPESEIVNTVEEAVAFAATIGYPVIVRPAFTLGGTGGGMCANEKELREITENGLKLSPVTQCLIERSIAGFKEIEYEVMRDSADNALVVCNMENFDPVGIHTGDSIVFAPAQTMSDYENQMLRDASLSIIRALKIEGGCNVQLALDPNSFKYYVIEVNPRVSRSSALASKATGYPIAKLAAKIAVGLTLDEVINPVTGSTYAMFEPALDYVVAKIPRFPFDKFEKGERRLGTQMKATGEVMAIGRNIEESLLKACRSLEIGVHHNEIPELAAVSDDALIEKVVKAQDDRLFYVSEAIRRGYTPEEIAELTKIDIFYLDKLLHIFEIEQELGAHPQDLEVLKTAKLNGFSDRKIAELWGTTDDQVRQLRLENKIVPVYKMVDTCAAEFDSETPYFYSTYGWENESIRSDKESVLVLGSGPIRIGQGVEFDYATVHSVKAIQAAGYEAIIMNSNPETVSTDFSVSDKLYFEPLTFEDVMNVIDLEQPKGVIVQFGGQTAINLAEPLAKAGVTILGTQVADLDRAEDRDLFEQALKELDIPQPPGQTATNEEEAALAARKIGFPVLVRPSYVLGGRAMEIVENEEDLRSYMRTAVKASPDHPVLVDSYIVGQECEVDAISDGKDVLIPGIMEHIERAGVHSGDSMAVYPPQTLSQKVQETIADYTKRLAIGLHCLGMMNIQFVIKDEKVYVIEVNPRASRTVPFLSKVTNIPMAQVATKLILGQSLSELGYQNGLYPESTRVHIKAPVFSFTKLAKVDSLLGPEMKSTGEVMGSDATLEKALYKAFEASYLHLPTFGNVVFTIADDAKEEALNLARRFQNIGYGILATEGTAAFFASHGLQAQPVGKIGDDDKDIPSFVRKGRIQAIINTVGTKRTADEDGEQIRRSAIEHGVPLFTALDTANAMLKVLESRSFVTEAI.

Positions 1–401 (MPKRTDIQKI…SLLKACRSLE (401 aa)) are carboxyphosphate synthetic domain. Positions 129, 169, 175, 176, 208, 210, 215, 241, 242, 243, 284, and 298 each coordinate ATP. The ATP-grasp 1 domain occupies 133–327 (KQLMEELEQP…IAKLAAKIAV (195 aa)). Mg(2+) is bound by residues glutamine 284, glutamate 298, and asparagine 300. Residues glutamine 284, glutamate 298, and asparagine 300 each coordinate Mn(2+). The oligomerization domain stretch occupies residues 402-546 (IGVHHNEIPE…YSTYGWENES (145 aa)). The interval 547-929 (IRSDKESVLV…ALYKAFEASY (383 aa)) is carbamoyl phosphate synthetic domain. One can recognise an ATP-grasp 2 domain in the interval 671–861 (EQALKELDIP…MAQVATKLIL (191 aa)). Arginine 707, serine 746, isoleucine 748, glutamate 752, glycine 777, valine 778, histidine 779, serine 780, glutamine 820, and glutamate 832 together coordinate ATP. Residues glutamine 820, glutamate 832, and asparagine 834 each coordinate Mg(2+). Glutamine 820, glutamate 832, and asparagine 834 together coordinate Mn(2+). The MGS-like domain maps to 930-1058 (LHLPTFGNVV…ESRSFVTEAI (129 aa)). Positions 930 to 1058 (LHLPTFGNVV…ESRSFVTEAI (129 aa)) are allosteric domain.

This sequence belongs to the CarB family. Composed of two chains; the small (or glutamine) chain promotes the hydrolysis of glutamine to ammonia, which is used by the large (or ammonia) chain to synthesize carbamoyl phosphate. Tetramer of heterodimers (alpha,beta)4. Mg(2+) serves as cofactor. Mn(2+) is required as a cofactor.

The enzyme catalyses hydrogencarbonate + L-glutamine + 2 ATP + H2O = carbamoyl phosphate + L-glutamate + 2 ADP + phosphate + 2 H(+). It catalyses the reaction hydrogencarbonate + NH4(+) + 2 ATP = carbamoyl phosphate + 2 ADP + phosphate + 2 H(+). It functions in the pathway amino-acid biosynthesis; L-arginine biosynthesis; carbamoyl phosphate from bicarbonate: step 1/1. The protein operates within pyrimidine metabolism; UMP biosynthesis via de novo pathway; (S)-dihydroorotate from bicarbonate: step 1/3. Functionally, large subunit of the glutamine-dependent carbamoyl phosphate synthetase (CPSase). CPSase catalyzes the formation of carbamoyl phosphate from the ammonia moiety of glutamine, carbonate, and phosphate donated by ATP, constituting the first step of 2 biosynthetic pathways, one leading to arginine and/or urea and the other to pyrimidine nucleotides. The large subunit (synthetase) binds the substrates ammonia (free or transferred from glutamine from the small subunit), hydrogencarbonate and ATP and carries out an ATP-coupled ligase reaction, activating hydrogencarbonate by forming carboxy phosphate which reacts with ammonia to form carbamoyl phosphate. The protein is Carbamoyl phosphate synthase large chain of Streptococcus pneumoniae (strain JJA).